A 702-amino-acid polypeptide reads, in one-letter code: MADS-box MEF2 type transcription factor MIG1 (702 aa).

Residues 1–61 (MGRRKIEIKA…KKLYEYSSGD (61 aa)) enclose the MADS-box domain. Disordered regions lie at residues 73-608 (GGAT…NIDT) and 658-702 (PSFL…KVDS). Over residues 86–96 (GGDDDDEEEGD) the composition is skewed to acidic residues. The segment covering 132 to 144 (ASPPIPNGVPFPP) has biased composition (pro residues). Positions 145–155 (HGHGVPRGHTP) are enriched in low complexity. Positions 180 to 195 (GSPQVNGFGFGQQQSM) are enriched in polar residues. The span at 201 to 241 (TTMPPHMPPQMAPGPPFPYPQHPQHPPHPPHPPHPPHPQQP) shows a compositional bias: pro residues. Low complexity-rich tracts occupy residues 273–284 (PMGMQRHSVSPP), 326–343 (ESPQ…QQPE), and 350–371 (EQQQ…QSEP). A compositionally biased stretch (polar residues) spans 456–465 (VDESTSNASE). 2 stretches are compositionally biased toward low complexity: residues 487–512 (RASI…SLRA) and 530–553 (DGSG…DATS). Over residues 554–567 (QSTRQNDSHSSTNM) the composition is skewed to polar residues. Residues 587-600 (PPNPFAPKRPPQHP) are compositionally biased toward pro residues. A compositionally biased stretch (basic and acidic residues) spans 693–702 (NEPKRVKVDS).

This sequence belongs to the MEF2 family. As to quaternary structure, interacts with MAPK MPS1.

The protein resides in the nucleus. Its function is as follows. Transcription factor acting downstream of the MPS1 MAP kinase (MAPK) cascade during conidiation and plant infection. Required for overcoming plant defense responses and the differentiation of secondary infectious hyphae in live plant cells. The sequence is that of MADS-box MEF2 type transcription factor MIG1 from Pyricularia oryzae (Rice blast fungus).